Here is a 337-residue protein sequence, read N- to C-terminus: DNA-directed RNA polymerase subunit alpha (337 aa).

The alpha N-terminal domain (alpha-NTD) stretch occupies residues 1–233; the sequence is MIQKNWQELI…DQLALFINFK (233 aa). The tract at residues 249-337 is alpha C-terminal domain (alpha-CTD); the sequence is FNPALLKKVD…DLAKRYEDQY (89 aa).

This sequence belongs to the RNA polymerase alpha chain family. Homodimer. The RNAP catalytic core consists of 2 alpha, 1 beta, 1 beta' and 1 omega subunit. When a sigma factor is associated with the core the holoenzyme is formed, which can initiate transcription.

It carries out the reaction RNA(n) + a ribonucleoside 5'-triphosphate = RNA(n+1) + diphosphate. Its function is as follows. DNA-dependent RNA polymerase catalyzes the transcription of DNA into RNA using the four ribonucleoside triphosphates as substrates. The polypeptide is DNA-directed RNA polymerase subunit alpha (Bartonella henselae (strain ATCC 49882 / DSM 28221 / CCUG 30454 / Houston 1) (Rochalimaea henselae)).